The sequence spans 350 residues: Casein kinase II subunit alpha' (350 aa).

In terms of domain architecture, Protein kinase spans tyrosine 40 to phenylalanine 325. Residues leucine 46 to valine 54 and lysine 69 contribute to the ATP site. Aspartate 157 serves as the catalytic Proton acceptor.

It belongs to the protein kinase superfamily. Ser/Thr protein kinase family. CK2 subfamily. Tetramer composed of an alpha chain, an alpha' and two beta chains.

The catalysed reaction is L-seryl-[protein] + ATP = O-phospho-L-seryl-[protein] + ADP + H(+). It catalyses the reaction L-threonyl-[protein] + ATP = O-phospho-L-threonyl-[protein] + ADP + H(+). Its function is as follows. Casein kinases are operationally defined by their preferential utilization of acidic proteins such as caseins as substrates. The alpha and alpha' chains contain the catalytic site. Participates in Wnt signaling. The chain is Casein kinase II subunit alpha' from Gallus gallus (Chicken).